We begin with the raw amino-acid sequence, 418 residues long: Inward rectifier potassium channel 16 (418 aa).

The Cytoplasmic segment spans residues 1–67 (MSYYGSSYHI…VVDIFTTLVD (67 aa)). A helical membrane pass occupies residues 68-94 (TKWRHMFVIFSLSYILSWLIFGSVFWL). Topologically, residues 95 to 117 (IAFHHGDLLNDPDITPCVDNVHS) are extracellular. The segment at residues 118–134 (FTGAFLFSLETQTTIGY) is an intramembrane region (helical; Pore-forming). Positions 131 to 136 (TIGYGY) match the Selectivity filter motif. The Extracellular portion of the chain corresponds to 135–143 (GYRCVTEEC). The chain crosses the membrane as a helical span at residues 144–171 (SVAVLMVILQSILSCIINTFIIGAALAK). Topologically, residues 172–418 (MATARKRAQT…LNRISVESQM (247 aa)) are cytoplasmic. Phosphoserine occurs at positions 373 and 375.

This sequence belongs to the inward rectifier-type potassium channel (TC 1.A.2.1) family. KCNJ16 subfamily. In terms of assembly, it forms heteromeric channels with Kir4.1/KCNJ10; this interaction is required for KCNJ16 localization to the basolateral membrane in kidney cells. As a heteromer with KCNJ10, may interact with MAGI1; this interaction may facilitate KCNJ10/KCNJ16 potassium channel expression at the basolateral membrane in kidney cells. May form heteromers with Kir2.1/KCNJ2. Can form heteromeric channels with Kir4.2/KCNJ15. Widely expressed, with highest levels in adult and fetal kidney (at protein level). In the kidney, expressed in the proximal and distal convoluted tubules, but not in glomeruli nor collecting ducts.

The protein resides in the membrane. It localises to the basolateral cell membrane. The enzyme catalyses K(+)(in) = K(+)(out). With respect to regulation, channel activity is strongly regulated by variations of cytosolic pH; channels are activated by alkaline and inhibited by acidic pH values. Activated by phosphatidylinositol 4,5 biphosphate (PtdIns(4,5)P2). Functionally, inward rectifier potassium channels are characterized by a greater tendency to allow potassium to flow into the cell rather than out of it. Their voltage dependence is regulated by the concentration of extracellular potassium; as external potassium is raised, the voltage range of the channel opening shifts to more positive voltages. The inward rectification is mainly due to the blockage of outward current by internal magnesium. KCNJ16 may be involved in the regulation of fluid and pH balance. In the kidney, together with KCNJ10, mediates basolateral K(+) recycling in distal tubules; this process is critical for Na(+) reabsorption at the tubules. This Homo sapiens (Human) protein is Inward rectifier potassium channel 16 (KCNJ16).